Reading from the N-terminus, the 305-residue chain is MSNLPFTVAALYCFAPLPQYESLREPLAQLCCANGIKGTLLLAAEGINGTVAGSAGAIEKLIAHITAIPGLGEPELKYSHASEMPFHRMKVRLKREIVTMGVEGIDPLKSVGTYIAPKDWNALIADENTVVVDTRNDYEYAIGTFEGAIDPQTRTFREFPEWVKQNRDRLEGKKIAMFCTGGIRCEKATAFVKGLGFDDVYHLKGGILKYLEEVPREQSMWNGECFVFDERVAVGHGLAESDVELCRACRRPLTPQDKLSQFFEEGVSCAGCYAERTPEDRARYAERQKQVKLAEKRGANKHIGS.

Residues 125–219 (ADENTVVVDT…YLEEVPREQS (95 aa)) enclose the Rhodanese domain. The Cysteine persulfide intermediate role is filled by Cys179.

The protein belongs to the TrhO family.

It catalyses the reaction uridine(34) in tRNA + AH2 + O2 = 5-hydroxyuridine(34) in tRNA + A + H2O. Its function is as follows. Catalyzes oxygen-dependent 5-hydroxyuridine (ho5U) modification at position 34 in tRNAs. The polypeptide is tRNA uridine(34) hydroxylase (Brucella ovis (strain ATCC 25840 / 63/290 / NCTC 10512)).